A 389-amino-acid polypeptide reads, in one-letter code: MDLFEYQARDMFEAHGVPVLAGIVAHTPEEAKAAAEKIGGVTVVKAQVKVGGRGKAGGVKVAKTAEEALEHSTNILGMDIKGHTVNKVMIAQGADIAEEFYFSVLLDRANRNYLAMCSVEGGMEIEQLAVERPEALAKIAIDPAVGIDQAKADEIVAAAGFAEELRGKVADVILKLWDVFKKEDATLVEVNPLVRTGAGEIVALDGKVSLDENADFRHVHHAHLEDKDAADPLEAKAKAQDLNYVKLDGEVGIIGNGAGLVMSTLDVVAYAGENHGNVKPANFLDIGGGASAEVMANGLDVILGDSQVKSVFVNVFGGITACDAVAKGIVGALAELGSSANKPLVVRLDGNNVEEGRRILTEANHPLVTLAATMDEGADKAAELANAAK.

The region spanning 9–236 (RDMFEAHGVP…KDAADPLEAK (228 aa)) is the ATP-grasp domain. ATP contacts are provided by residues Lys45, 52–54 (GRG), Ala94, and Glu99. Residues Asn191 and Asp205 each contribute to the Mg(2+) site. Substrate-binding positions include Asn256 and 318-320 (GIT).

The protein belongs to the succinate/malate CoA ligase beta subunit family. Heterotetramer of two alpha and two beta subunits. Mg(2+) is required as a cofactor.

The catalysed reaction is succinate + ATP + CoA = succinyl-CoA + ADP + phosphate. The enzyme catalyses GTP + succinate + CoA = succinyl-CoA + GDP + phosphate. It participates in carbohydrate metabolism; tricarboxylic acid cycle; succinate from succinyl-CoA (ligase route): step 1/1. Its function is as follows. Succinyl-CoA synthetase functions in the citric acid cycle (TCA), coupling the hydrolysis of succinyl-CoA to the synthesis of either ATP or GTP and thus represents the only step of substrate-level phosphorylation in the TCA. The beta subunit provides nucleotide specificity of the enzyme and binds the substrate succinate, while the binding sites for coenzyme A and phosphate are found in the alpha subunit. This Paenarthrobacter aurescens (strain TC1) protein is Succinate--CoA ligase [ADP-forming] subunit beta.